A 182-amino-acid polypeptide reads, in one-letter code: ATP synthase subunit b, chloroplastic (182 aa).

Residues 33-51 traverse the membrane as a helical segment; the sequence is VLNIAILLSGVIYLGRNFL.

The protein belongs to the ATPase B chain family. F-type ATPases have 2 components, F(1) - the catalytic core - and F(0) - the membrane proton channel. F(1) has five subunits: alpha(3), beta(3), gamma(1), delta(1), epsilon(1). F(0) has four main subunits: a(1), b(1), b'(1) and c(10-14). The alpha and beta chains form an alternating ring which encloses part of the gamma chain. F(1) is attached to F(0) by a central stalk formed by the gamma and epsilon chains, while a peripheral stalk is formed by the delta, b and b' chains.

The protein resides in the plastid. Its subcellular location is the chloroplast thylakoid membrane. In terms of biological role, f(1)F(0) ATP synthase produces ATP from ADP in the presence of a proton or sodium gradient. F-type ATPases consist of two structural domains, F(1) containing the extramembraneous catalytic core and F(0) containing the membrane proton channel, linked together by a central stalk and a peripheral stalk. During catalysis, ATP synthesis in the catalytic domain of F(1) is coupled via a rotary mechanism of the central stalk subunits to proton translocation. Its function is as follows. Component of the F(0) channel, it forms part of the peripheral stalk, linking F(1) to F(0). In Guillardia theta (Cryptophyte), this protein is ATP synthase subunit b, chloroplastic.